The sequence spans 450 residues: Probable glycylpeptide N-tetradecanoyltransferase (450 aa).

The tract at residues 1–28 is disordered; the sequence is MSHGHSHDGAPCGGHHGDDGAGGSRPSV. Residues glutamine 67, phenylalanine 68, tryptophan 69, phenylalanine 200, leucine 201, cysteine 202, valine 203, serine 209, arginine 211, valine 212, and alanine 213 each coordinate tetradecanoyl-CoA.

Belongs to the NMT family.

The protein resides in the cytoplasm. The enzyme catalyses N-terminal glycyl-[protein] + tetradecanoyl-CoA = N-tetradecanoylglycyl-[protein] + CoA + H(+). Adds a myristoyl group to the N-terminal glycine residue of certain cellular proteins. This chain is Probable glycylpeptide N-tetradecanoyltransferase (nmt-1), found in Caenorhabditis elegans.